We begin with the raw amino-acid sequence, 156 residues long: Enhancer of split M1 protein (156 aa).

The N-terminal stretch at 1 to 19 (MMSQTLTLCCLALVACVYG) is a signal peptide. 2 Kazal-like domains span residues 23 to 81 (STND…AWCS) and 96 to 156 (KLEV…EEKC). 5 disulfides stabilise this stretch: C29-C62, C33-C55, C102-C135, C106-C128, and C114-C156.

The chain is Enhancer of split M1 protein (Kaz-m1) from Drosophila melanogaster (Fruit fly).